Consider the following 332-residue polypeptide: Methylthioribose-1-phosphate isomerase (332 aa).

Substrate is bound by residues 44 to 46 (RGA), Arg87, and Gln192. Asp233 (proton donor) is an active-site residue. 243–244 (NK) contacts substrate.

This sequence belongs to the eIF-2B alpha/beta/delta subunits family. MtnA subfamily.

The enzyme catalyses 5-(methylsulfanyl)-alpha-D-ribose 1-phosphate = 5-(methylsulfanyl)-D-ribulose 1-phosphate. Its pathway is amino-acid biosynthesis; L-methionine biosynthesis via salvage pathway; L-methionine from S-methyl-5-thio-alpha-D-ribose 1-phosphate: step 1/6. Functionally, catalyzes the interconversion of methylthioribose-1-phosphate (MTR-1-P) into methylthioribulose-1-phosphate (MTRu-1-P). The polypeptide is Methylthioribose-1-phosphate isomerase (Dehalococcoides mccartyi (strain CBDB1)).